Reading from the N-terminus, the 608-residue chain is Glutamine--fructose-6-phosphate aminotransferase [isomerizing] (608 aa).

The Nucleophile; for GATase activity role is filled by cysteine 2. The 216-residue stretch at 2–217 folds into the Glutamine amidotransferase type-2 domain; it reads CGIVGIVGNQ…DGDWAVIGKT (216 aa). 2 SIS domains span residues 281–422 and 456–598; these read ISDA…ARGT and LSRE…VDQP. The active-site For Fru-6P isomerization activity is the lysine 603.

As to quaternary structure, homodimer.

Its subcellular location is the cytoplasm. The catalysed reaction is D-fructose 6-phosphate + L-glutamine = D-glucosamine 6-phosphate + L-glutamate. Its function is as follows. Catalyzes the first step in hexosamine metabolism, converting fructose-6P into glucosamine-6P using glutamine as a nitrogen source. The polypeptide is Glutamine--fructose-6-phosphate aminotransferase [isomerizing] (Rhizobium meliloti (strain 1021) (Ensifer meliloti)).